A 215-amino-acid polypeptide reads, in one-letter code: MVLLTMIARVADGLPLAASMQEDEQSGRDLQQYQSQAKQLFRKLNEQSPTRCTLEAGAMTFHYIIEQGVCYLVLCEAAFPKKLAFAYLEDLHSEFDEQHGKKVPTVSRPYSFIEFDTFIQKTKKLYIDSRARRNLGSINTELQDVQRIMVANIEEVLQRGEALSALDSKANNLSSLSKKYRQDAKYLNMRSTYAKLAAVAVFFIMLIVYVRFWWL.

Over 2–194 (VLLTMIARVA…KYLNMRSTYA (193 aa)) the chain is Cytoplasmic. In terms of domain architecture, Longin spans 6–119 (MIARVADGLP…YSFIEFDTFI (114 aa)). Lys38 is subject to N6-acetyllysine. In terms of domain architecture, v-SNARE coiled-coil homology spans 134-194 (NLGSINTELQ…KYLNMRSTYA (61 aa)). A Phosphoserine modification is found at Ser137. Thr140 carries the post-translational modification Phosphothreonine. Ser164, Ser168, Ser174, and Ser177 each carry phosphoserine. The helical; Anchor for type IV membrane protein transmembrane segment at 195–215 (KLAAVAVFFIMLIVYVRFWWL) threads the bilayer.

This sequence belongs to the synaptobrevin family. In terms of assembly, interacts with STX17. Component of two distinct SNARE complexes consisting of STX5, GOSR2/BOS1, BET1 and SEC22B or STX18, USE1L, BNIP1/SEC20L and SEC22B. YKT6 can probably replace SEC22B in either complex. Interacts with the COPII Sec23/24 complex composed of SEC23A and SEC24A; recruits SEC22B into COPII-coated vesicles to allow its transport from the endoplasmic reticulum to the Golgi. Interacts with BET1.

It is found in the endoplasmic reticulum membrane. Its subcellular location is the endoplasmic reticulum-Golgi intermediate compartment membrane. It localises to the golgi apparatus. The protein resides in the cis-Golgi network membrane. The protein localises to the trans-Golgi network membrane. It is found in the melanosome. Functionally, SNARE involved in targeting and fusion of ER-derived transport vesicles with the Golgi complex as well as Golgi-derived retrograde transport vesicles with the ER. This Homo sapiens (Human) protein is Vesicle-trafficking protein SEC22b (SEC22B).